We begin with the raw amino-acid sequence, 414 residues long: Nuclear localization sequence-binding protein (414 aa).

Disordered stretches follow at residues 1–172, 244–264, and 336–414; these read MAKT…TIFV, STSK…TPSE, and RPVR…KTFD. The span at 10 to 26 shows a compositional bias: basic and acidic residues; sequence NKKEVKASKQAKEEKAK. Composition is skewed to low complexity over residues 27–44 and 54–73; these read AVSS…SSSE and ESSS…SSSD. Basic and acidic residues predominate over residues 78–87; it reads AETKKEESKD. Phosphoserine occurs at positions 93, 95, 96, 97, 116, 127, 129, 131, and 143. A compositionally biased stretch (acidic residues) spans 96–105; that stretch reads SSDEEEEEEK. Over residues 106-117 the composition is skewed to basic and acidic residues; that stretch reads EETKKEESKESS. Positions 118 to 128 are enriched in low complexity; the sequence is SSDSSSSSSSD. A compositionally biased stretch (basic and acidic residues) spans 134 to 144; that stretch reads EESNDKKRKSE. RRM domains are found at residues 168 to 246 and 267 to 345; these read ATIF…MSTS and DTLF…FSSP. Positions 351-386 are enriched in gly residues; the sequence is GGRGGSRGFGGRGGGRGGNRGFGGRGGARGGRGGFR. Position 353 is an omega-N-methylarginine (Arg353). Residues 353–384 form an RGG-box region; it reads RGGSRGFGGRGGGRGGNRGFGGRGGARGGRGG. Asymmetric dimethylarginine; by HMT1; alternate occurs at positions 357, 362, and 366. 3 positions are modified to omega-N-methylarginine; by HMT1; alternate: Arg357, Arg362, and Arg366. The segment at 366–384 is RNA-binding RGG-box; it reads RGGNRGFGGRGGARGGRGG. At Arg370 the chain carries Omega-N-methylarginine. An asymmetric dimethylarginine; by HMT1; alternate mark is found at Arg375, Arg379, and Arg382. Residues Arg375, Arg379, and Arg382 each carry the omega-N-methylarginine; by HMT1; alternate modification. Residue Arg386 is modified to Omega-N-methylarginine.

The protein belongs to the RRM GAR family. Methylated by HMT1, forming asymmetric dimethylarginines (DMA) within a domain referred to as an RGG box, made up of repeated Gly-Gly dipeptides interspersed with Arg and aromatic residues. In terms of processing, pyrophosphorylated by 5-diphosphoinositol pentakisphosphate (5-IP7). Serine pyrophosphorylation is achieved by Mg(2+)-dependent, but enzyme independent transfer of a beta-phosphate from a inositol pyrophosphate to a pre-phosphorylated serine residue.

The protein resides in the nucleus. Its subcellular location is the nucleolus. In terms of biological role, involved in pre-rRNA processing. Specifically binds nuclear localization sequences. Candidate for a receptor at the nucleus that may be involved in both RNA and protein transport. Binds telomeric sequences of the type (TG[1-3])n in vitro. This Saccharomyces cerevisiae (strain ATCC 204508 / S288c) (Baker's yeast) protein is Nuclear localization sequence-binding protein.